Here is a 315-residue protein sequence, read N- to C-terminus: Tyrosine--tRNA ligase (315 aa).

Tyr32 contacts L-tyrosine. The 'HIGH' region signature appears at 37-45 (PSGEIHLGH). Residues Tyr152, Gln156, Asp159, and Gln174 each coordinate L-tyrosine. A 'KMSKS' region motif is present at residues 208-212 (KMSSS). Residue Ser211 coordinates ATP.

This sequence belongs to the class-I aminoacyl-tRNA synthetase family. TyrS type 3 subfamily. Homodimer.

It is found in the cytoplasm. The enzyme catalyses tRNA(Tyr) + L-tyrosine + ATP = L-tyrosyl-tRNA(Tyr) + AMP + diphosphate + H(+). In terms of biological role, catalyzes the attachment of tyrosine to tRNA(Tyr) in a two-step reaction: tyrosine is first activated by ATP to form Tyr-AMP and then transferred to the acceptor end of tRNA(Tyr). The protein is Tyrosine--tRNA ligase of Methanoculleus marisnigri (strain ATCC 35101 / DSM 1498 / JR1).